We begin with the raw amino-acid sequence, 232 residues long: 7-cyano-7-deazaguanine synthase (232 aa).

8–18 contacts ATP; that stretch reads FSGGQDSTTCL. Positions 187, 196, 199, and 202 each coordinate Zn(2+).

The protein belongs to the QueC family. Requires Zn(2+) as cofactor.

The catalysed reaction is 7-carboxy-7-deazaguanine + NH4(+) + ATP = 7-cyano-7-deazaguanine + ADP + phosphate + H2O + H(+). It participates in purine metabolism; 7-cyano-7-deazaguanine biosynthesis. Catalyzes the ATP-dependent conversion of 7-carboxy-7-deazaguanine (CDG) to 7-cyano-7-deazaguanine (preQ(0)). This chain is 7-cyano-7-deazaguanine synthase, found in Shewanella denitrificans (strain OS217 / ATCC BAA-1090 / DSM 15013).